A 705-amino-acid polypeptide reads, in one-letter code: Choline transporter-like protein 2 (705 aa).

The Cytoplasmic portion of the chain corresponds to 1–31; sequence MEDQRKYGAYGTPQKYDPTFKGPIYNRGCTD. Phosphothreonine is present on threonine 12. Residues 32–52 form a helical membrane-spanning segment; sequence VLCCVLLFLAIVGYVAVGLIA. The Extracellular portion of the chain corresponds to 53–231; the sequence is WTHGDPRKVI…RIFEDYTVSW (179 aa). Asparagine 186 and asparagine 199 each carry an N-linked (GlcNAc...) asparagine glycan. A helical transmembrane segment spans residues 232–252; that stretch reads YWIVIGLVIAMVLSLLFIILL. The Cytoplasmic portion of the chain corresponds to 253–255; it reads RFL. Residues 256-276 form a helical membrane-spanning segment; sequence AGIMVWVMIVLVILVLGYGIF. The Extracellular segment spans residues 277 to 314; the sequence is HCYMEYARLRGEAGSDISVLDLGFQTDFRVYLHLRQTW. Residues 315-335 traverse the membrane as a helical segment; it reads LAFMIILSILEVIIILLLIFL. Over 336-363 the chain is Cytoplasmic; it reads RKRILIAIALIKEASRAVGYVMCSLLYP. Residues 364–384 traverse the membrane as a helical segment; that stretch reads LVTFFLLCLCIAYWASTAVFL. Residues 385 to 455 are Extracellular-facing; it reads STSNEAVYKI…IFNAFMFFWL (71 aa). Asparagine 414 carries an N-linked (GlcNAc...) asparagine glycan. The chain crosses the membrane as a helical span at residues 456–478; that stretch reads ANFVLALGQVTLAGAFASYYWAL. At 479–503 the chain is on the cytoplasmic side; sequence RKPDDMPAFPLFAAFGRALRYHTGS. Residues 504–524 traverse the membrane as a helical segment; that stretch reads LAFGSLILAIVQIIRVILEYL. The Extracellular portion of the chain corresponds to 525–562; the sequence is DQRLKAAENKFAKFLMTCLKCCFWCLEKFIKFLNRNAY. A helical transmembrane segment spans residues 563–583; sequence IMIAIYGTNFCTSARNAFFLL. Over 584-598 the chain is Cytoplasmic; it reads MRNIIRVAVLDKVTD. The helical transmembrane segment at 599 to 619 threads the bilayer; the sequence is FLFLLGKLLIVGSVGILAFFF. Over 620–637 the chain is Extracellular; it reads FTHRIRIVQDTAPPLNYY. Residues 638–658 traverse the membrane as a helical segment; the sequence is WVPILTVIVGSYLIAHGFFSV. The Cytoplasmic portion of the chain corresponds to 659-705; it reads YGMCVDTLFLCFLEDLERNNGSSERPYFMSSTLKKLLNKTNKKPVES.

This sequence belongs to the CTL (choline transporter-like) family. In terms of assembly, interacts with COCH. In terms of processing, N-glycosylated; contains sialic acid. Not O-glycosylated. Expressed at high levels in lung, colon and in supporting cells of the inner ear (at protein level). Progressively lower levels in brain, tongue, liver and kidney (at protein level). In the tongue, strongly expressed in epithelial cells and in nerves within the musculature. Within the nerves, expression observed in the perineurial cells of the nerve sheath, in the Schwann cells and myelinated nerve fibers (at protein level). In the kidney, prominent expression in glomeruli in the lining of Bowman's capsule and on the mesangial cells adjacent to the vessels within the glomerulus (at protein level). Strongly expressed on the membranes of splenocytes (at protein level).

It is found in the cell membrane. It localises to the mitochondrion outer membrane. It carries out the reaction choline(out) + n H(+)(in) = choline(in) + n H(+)(out). The enzyme catalyses ethanolamine(out) + n H(+)(in) = ethanolamine(in) + n H(+)(out). Choline/H+ antiporter, mainly in mitochodria. Also acts as a low-affinity ethanolamine/H+ antiporter, regulating the supply of extracellular ethanolamine (Etn) for the CDP-Etn pathway, redistribute intracellular Etn and balance the CDP-Cho and CDP-Etn arms of the Kennedy pathway. This chain is Choline transporter-like protein 2 (SLC44A2), found in Cavia porcellus (Guinea pig).